Consider the following 572-residue polypeptide: Proline--tRNA ligase (572 aa).

This sequence belongs to the class-II aminoacyl-tRNA synthetase family. ProS type 1 subfamily. Homodimer.

The protein resides in the cytoplasm. The catalysed reaction is tRNA(Pro) + L-proline + ATP = L-prolyl-tRNA(Pro) + AMP + diphosphate. In terms of biological role, catalyzes the attachment of proline to tRNA(Pro) in a two-step reaction: proline is first activated by ATP to form Pro-AMP and then transferred to the acceptor end of tRNA(Pro). As ProRS can inadvertently accommodate and process non-cognate amino acids such as alanine and cysteine, to avoid such errors it has two additional distinct editing activities against alanine. One activity is designated as 'pretransfer' editing and involves the tRNA(Pro)-independent hydrolysis of activated Ala-AMP. The other activity is designated 'posttransfer' editing and involves deacylation of mischarged Ala-tRNA(Pro). The misacylated Cys-tRNA(Pro) is not edited by ProRS. The protein is Proline--tRNA ligase of Escherichia coli O7:K1 (strain IAI39 / ExPEC).